The primary structure comprises 301 residues: Ankyrin repeat domain-containing protein 29 (301 aa).

ANK repeat units lie at residues 11 to 41 (PLAN…DVDC), 45 to 74 (HGTT…DINL), 78 to 107 (SGTT…STEF), 111 to 140 (DGGT…NIHD), 144 to 173 (DGAT…KVNQ), 177 to 206 (DGTA…DRDA), 210 to 239 (DGTT…TLGI), and 242 to 271 (NGTS…DPSL).

The protein is Ankyrin repeat domain-containing protein 29 (ANKRD29) of Homo sapiens (Human).